A 403-amino-acid chain; its full sequence is Phosphoglycerate kinase (403 aa).

Substrate-binding positions include 24–26 (DLN), Arg39, 62–65 (HLGR), Arg121, and Arg161. Residues Lys211, Gly299, Glu330, and 359–362 (GGDS) contribute to the ATP site.

The protein belongs to the phosphoglycerate kinase family. Monomer.

Its subcellular location is the cytoplasm. It catalyses the reaction (2R)-3-phosphoglycerate + ATP = (2R)-3-phospho-glyceroyl phosphate + ADP. The protein operates within carbohydrate degradation; glycolysis; pyruvate from D-glyceraldehyde 3-phosphate: step 2/5. The chain is Phosphoglycerate kinase from Rhodococcus erythropolis (strain PR4 / NBRC 100887).